Here is a 297-residue protein sequence, read N- to C-terminus: Ribosomal protein L11 methyltransferase (297 aa).

Residues T152, G173, D195, and N234 each contribute to the S-adenosyl-L-methionine site.

This sequence belongs to the methyltransferase superfamily. PrmA family.

The protein resides in the cytoplasm. It carries out the reaction L-lysyl-[protein] + 3 S-adenosyl-L-methionine = N(6),N(6),N(6)-trimethyl-L-lysyl-[protein] + 3 S-adenosyl-L-homocysteine + 3 H(+). Functionally, methylates ribosomal protein L11. In Cupriavidus pinatubonensis (strain JMP 134 / LMG 1197) (Cupriavidus necator (strain JMP 134)), this protein is Ribosomal protein L11 methyltransferase.